The following is a 309-amino-acid chain: MPSMELSVISPCSSANLGPGYDVLAIAFDAFYDQVNVMLSDKLRILADEIPVQPDKNTAGLTALKMIEDFGIKDGIKISIKKGIPYGLGLGSSGSSAAAAAYAINNLFALGLERKDLIKYAAVGELASSGSPHPDNVSASILGGLVIVSPEGISAKRIEVSDQFKFLLVIADLKIRDKTKYARSLVPSGVSMGDHKRNTSRVASLIAGLMSGDRELVSTGMNDDIVEAAREPIFPYYRRVKDTAIESGAVGAVVSGAGPSILVVYDNKTETKQMIRKISRIYEGMGISVNFATPNVADGVREVANPLAD.

An ATP-binding site is contributed by 85-95 (PYGLGLGSSGS).

The protein belongs to the GHMP kinase family. Homoserine kinase subfamily.

It is found in the cytoplasm. The catalysed reaction is L-homoserine + ATP = O-phospho-L-homoserine + ADP + H(+). Its pathway is amino-acid biosynthesis; L-threonine biosynthesis; L-threonine from L-aspartate: step 4/5. Catalyzes the ATP-dependent phosphorylation of L-homoserine to L-homoserine phosphate. The chain is Homoserine kinase from Thermoplasma volcanium (strain ATCC 51530 / DSM 4299 / JCM 9571 / NBRC 15438 / GSS1).